An 893-amino-acid chain; its full sequence is Protein FAM186B (893 aa).

5 disordered regions span residues 177-207, 327-376, 537-557, 574-611, and 806-827; these read GWQGRSPQTSPSHPQPLSPEQMLQDQHTMNT, QAED…PSPM, LEKEQESPRREPEQLGEDVER, LSLVPAPSRTQSAHQSRRPHLPMSPSTQQPALGKQRPM, and KPKKCKLPAASPRHIRPSGPTY. 2 stretches are compositionally biased toward polar residues: residues 179–188 and 197–207; these read QGRSPQTSPS and QMLQDQHTMNT. Residues 303-331 adopt a coiled-coil conformation; the sequence is RYHDLLLMKQALEFQLKKAQNATGQAEDL. Residues 342–353 are compositionally biased toward basic and acidic residues; it reads SERETLPRKETV.

This sequence belongs to the FAM186 family.

This Homo sapiens (Human) protein is Protein FAM186B (FAM186B).